The primary structure comprises 563 residues: Alpha-keto-acid decarboxylase (563 aa).

Residue glutamate 59 coordinates thiamine diphosphate. The disordered stretch occupies residues 348 to 367; that stretch reads SPPVASPPAEPLPPPPPREQ. The span at 351–366 shows a compositional bias: pro residues; sequence VASPPAEPLPPPPPRE. The thiamine pyrophosphate binding stretch occupies residues 394-476; that stretch reads TSFYGMADHR…VVVNNDGYTV (83 aa). Residues aspartate 444, asparagine 471, and glycine 473 each coordinate Mg(2+).

Belongs to the TPP enzyme family. The cofactor is a metal cation. Thiamine diphosphate serves as cofactor.

Functionally, decarboxylates branched-chain and aromatic alpha-keto acids to aldehydes. The protein is Alpha-keto-acid decarboxylase (kdc) of Mycobacterium avium (strain 104).